The primary structure comprises 384 residues: Succinyl-diaminopimelate desuccinylase (384 aa).

Position 71 (H71) interacts with Zn(2+). D73 is an active-site residue. D104 contributes to the Zn(2+) binding site. Catalysis depends on E139, which acts as the Proton acceptor. Zn(2+)-binding residues include E140, E168, and H357.

Belongs to the peptidase M20A family. DapE subfamily. As to quaternary structure, homodimer. Zn(2+) serves as cofactor. Requires Co(2+) as cofactor.

It carries out the reaction N-succinyl-(2S,6S)-2,6-diaminopimelate + H2O = (2S,6S)-2,6-diaminopimelate + succinate. It functions in the pathway amino-acid biosynthesis; L-lysine biosynthesis via DAP pathway; LL-2,6-diaminopimelate from (S)-tetrahydrodipicolinate (succinylase route): step 3/3. Its function is as follows. Catalyzes the hydrolysis of N-succinyl-L,L-diaminopimelic acid (SDAP), forming succinate and LL-2,6-diaminopimelate (DAP), an intermediate involved in the bacterial biosynthesis of lysine and meso-diaminopimelic acid, an essential component of bacterial cell walls. The chain is Succinyl-diaminopimelate desuccinylase from Afipia carboxidovorans (strain ATCC 49405 / DSM 1227 / KCTC 32145 / OM5) (Oligotropha carboxidovorans).